A 635-amino-acid chain; its full sequence is Threonine--tRNA ligase (635 aa).

The TGS domain maps to Met-1–Thr-61. The segment at Asp-242–Pro-533 is catalytic. Zn(2+) contacts are provided by Cys-333, His-384, and His-510.

It belongs to the class-II aminoacyl-tRNA synthetase family. As to quaternary structure, homodimer. Requires Zn(2+) as cofactor.

It localises to the cytoplasm. The catalysed reaction is tRNA(Thr) + L-threonine + ATP = L-threonyl-tRNA(Thr) + AMP + diphosphate + H(+). Catalyzes the attachment of threonine to tRNA(Thr) in a two-step reaction: L-threonine is first activated by ATP to form Thr-AMP and then transferred to the acceptor end of tRNA(Thr). Also edits incorrectly charged L-seryl-tRNA(Thr). This is Threonine--tRNA ligase from Burkholderia lata (strain ATCC 17760 / DSM 23089 / LMG 22485 / NCIMB 9086 / R18194 / 383).